A 204-amino-acid polypeptide reads, in one-letter code: Small heat shock protein, chloroplastic (204 aa).

The segment at 34–55 (QMGRVDHDHELDDRSNRAPISR) is disordered. The segment covering 37–49 (RVDHDHELDDRSN) has biased composition (basic and acidic residues). In terms of domain architecture, sHSP spans 98–204 (GSGRAMRRGW…KKDVFQVMVD (107 aa)).

The protein belongs to the small heat shock protein (HSP20) family.

The protein localises to the plastid. Its subcellular location is the chloroplast stroma. The polypeptide is Small heat shock protein, chloroplastic (HSP23) (Oxybasis rubra (Red goosefoot)).